The following is a 93-amino-acid chain: Small ribosomal subunit protein bS18 (93 aa).

Basic residues predominate over residues 1–11 (MAPSARNRKPG). The disordered stretch occupies residues 1 to 27 (MAPSARNRKPGARSMAKAAALRKPKKK).

This sequence belongs to the bacterial ribosomal protein bS18 family. As to quaternary structure, part of the 30S ribosomal subunit. Forms a tight heterodimer with protein bS6.

Functionally, binds as a heterodimer with protein bS6 to the central domain of the 16S rRNA, where it helps stabilize the platform of the 30S subunit. In Salinispora tropica (strain ATCC BAA-916 / DSM 44818 / JCM 13857 / NBRC 105044 / CNB-440), this protein is Small ribosomal subunit protein bS18.